Here is a 364-residue protein sequence, read N- to C-terminus: Chorismate synthase (364 aa).

Arginine 48 and arginine 54 together coordinate NADP(+). FMN contacts are provided by residues 129–131 (RSS), 243–244 (NA), glycine 288, 303–307 (KPTSS), and arginine 329.

Belongs to the chorismate synthase family. As to quaternary structure, homotetramer. Requires FMNH2 as cofactor.

The catalysed reaction is 5-O-(1-carboxyvinyl)-3-phosphoshikimate = chorismate + phosphate. It participates in metabolic intermediate biosynthesis; chorismate biosynthesis; chorismate from D-erythrose 4-phosphate and phosphoenolpyruvate: step 7/7. Its function is as follows. Catalyzes the anti-1,4-elimination of the C-3 phosphate and the C-6 proR hydrogen from 5-enolpyruvylshikimate-3-phosphate (EPSP) to yield chorismate, which is the branch point compound that serves as the starting substrate for the three terminal pathways of aromatic amino acid biosynthesis. This reaction introduces a second double bond into the aromatic ring system. The protein is Chorismate synthase of Chelativorans sp. (strain BNC1).